The following is a 208-amino-acid chain: Protein-L-isoaspartate O-methyltransferase (208 aa).

Residue Ser-59 is part of the active site.

This sequence belongs to the methyltransferase superfamily. L-isoaspartyl/D-aspartyl protein methyltransferase family.

The protein localises to the cytoplasm. The enzyme catalyses [protein]-L-isoaspartate + S-adenosyl-L-methionine = [protein]-L-isoaspartate alpha-methyl ester + S-adenosyl-L-homocysteine. Its function is as follows. Catalyzes the methyl esterification of L-isoaspartyl residues in peptides and proteins that result from spontaneous decomposition of normal L-aspartyl and L-asparaginyl residues. It plays a role in the repair and/or degradation of damaged proteins. This is Protein-L-isoaspartate O-methyltransferase from Salmonella newport (strain SL254).